A 219-amino-acid polypeptide reads, in one-letter code: Deoxyribose-phosphate aldolase 1 (219 aa).

Residue aspartate 87 is the Proton donor/acceptor of the active site. The active-site Schiff-base intermediate with acetaldehyde is the lysine 149. Lysine 178 acts as the Proton donor/acceptor in catalysis.

The protein belongs to the DeoC/FbaB aldolase family. DeoC type 1 subfamily.

It is found in the cytoplasm. It carries out the reaction 2-deoxy-D-ribose 5-phosphate = D-glyceraldehyde 3-phosphate + acetaldehyde. The protein operates within carbohydrate degradation; 2-deoxy-D-ribose 1-phosphate degradation; D-glyceraldehyde 3-phosphate and acetaldehyde from 2-deoxy-alpha-D-ribose 1-phosphate: step 2/2. In terms of biological role, catalyzes a reversible aldol reaction between acetaldehyde and D-glyceraldehyde 3-phosphate to generate 2-deoxy-D-ribose 5-phosphate. The polypeptide is Deoxyribose-phosphate aldolase 1 (Vibrio vulnificus (strain YJ016)).